The sequence spans 226 residues: Beta-casein (226 aa).

The segment at 1 to 51 (REKEELNVSSETVESLSSNEPDSSSEESITHINKEKSQKFKHEGQQQREVE) is disordered. Ser9 carries the phosphoserine modification. Position 12 is a phosphothreonine (Thr12). 4 positions are modified to phosphoserine: Ser15, Ser17, Ser18, and Ser25. The span at 28 to 51 (SITHINKEKSQKFKHEGQQQREVE) shows a compositional bias: basic and acidic residues.

Belongs to the beta-casein family. In terms of processing, there are at least three different forms found in milk, with varying degrees of phosphorylation. These include form 5-P which is phosphorylated at three sites, this form is present in low amounts, form 6-P which is phosphorylated at six sites, and form 7-P which is phosphorylated at seven sites. In terms of tissue distribution, mammary gland specific. Secreted in milk.

The protein localises to the secreted. In terms of biological role, important role in determination of the surface properties of the casein micelles. The polypeptide is Beta-casein (Equus asinus (Donkey)).